The following is a 616-amino-acid chain: Chaperone protein HscA (616 aa).

Belongs to the heat shock protein 70 family.

In terms of biological role, chaperone involved in the maturation of iron-sulfur cluster-containing proteins. Has a low intrinsic ATPase activity which is markedly stimulated by HscB. Involved in the maturation of IscU. The sequence is that of Chaperone protein HscA from Edwardsiella ictaluri (strain 93-146).